The sequence spans 215 residues: Nucleoside triphosphate pyrophosphatase (215 aa).

This sequence belongs to the Maf family. It depends on a divalent metal cation as a cofactor.

It localises to the cytoplasm. It catalyses the reaction a ribonucleoside 5'-triphosphate + H2O = a ribonucleoside 5'-phosphate + diphosphate + H(+). It carries out the reaction a 2'-deoxyribonucleoside 5'-triphosphate + H2O = a 2'-deoxyribonucleoside 5'-phosphate + diphosphate + H(+). Its function is as follows. Nucleoside triphosphate pyrophosphatase. May have a dual role in cell division arrest and in preventing the incorporation of modified nucleotides into cellular nucleic acids. The chain is Nucleoside triphosphate pyrophosphatase from Rickettsia conorii (strain ATCC VR-613 / Malish 7).